The chain runs to 209 residues: A-type ATP synthase subunit D (209 aa).

The protein belongs to the V-ATPase D subunit family. In terms of assembly, has multiple subunits with at least A(3), B(3), C, D, E, F, H, I and proteolipid K(x).

The protein localises to the cell membrane. Component of the A-type ATP synthase that produces ATP from ADP in the presence of a proton gradient across the membrane. The sequence is that of A-type ATP synthase subunit D from Methanosarcina acetivorans (strain ATCC 35395 / DSM 2834 / JCM 12185 / C2A).